A 457-amino-acid polypeptide reads, in one-letter code: Exodeoxyribonuclease 7 large subunit (457 aa).

This sequence belongs to the XseA family. Heterooligomer composed of large and small subunits.

It is found in the cytoplasm. The catalysed reaction is Exonucleolytic cleavage in either 5'- to 3'- or 3'- to 5'-direction to yield nucleoside 5'-phosphates.. Functionally, bidirectionally degrades single-stranded DNA into large acid-insoluble oligonucleotides, which are then degraded further into small acid-soluble oligonucleotides. This Cronobacter sakazakii (strain ATCC BAA-894) (Enterobacter sakazakii) protein is Exodeoxyribonuclease 7 large subunit.